The sequence spans 134 residues: Small ribosomal subunit protein uS8c (134 aa).

This sequence belongs to the universal ribosomal protein uS8 family. As to quaternary structure, part of the 30S ribosomal subunit.

The protein localises to the plastid. It localises to the chloroplast. One of the primary rRNA binding proteins, it binds directly to 16S rRNA central domain where it helps coordinate assembly of the platform of the 30S subunit. This Capsella bursa-pastoris (Shepherd's purse) protein is Small ribosomal subunit protein uS8c (rps8).